The sequence spans 157 residues: 2-C-methyl-D-erythritol 2,4-cyclodiphosphate synthase (157 aa).

Residues aspartate 8 and histidine 10 each coordinate a divalent metal cation. 4-CDP-2-C-methyl-D-erythritol 2-phosphate is bound by residues 8-10 and 34-35; these read DIH and HS. A divalent metal cation is bound at residue histidine 42. 4-CDP-2-C-methyl-D-erythritol 2-phosphate contacts are provided by residues 56-58, 61-65, 132-135, and arginine 142; these read DIG, FPDTD, and TTNE.

This sequence belongs to the IspF family. As to quaternary structure, homotrimer. A divalent metal cation serves as cofactor.

The catalysed reaction is 4-CDP-2-C-methyl-D-erythritol 2-phosphate = 2-C-methyl-D-erythritol 2,4-cyclic diphosphate + CMP. The protein operates within isoprenoid biosynthesis; isopentenyl diphosphate biosynthesis via DXP pathway; isopentenyl diphosphate from 1-deoxy-D-xylulose 5-phosphate: step 4/6. Involved in the biosynthesis of isopentenyl diphosphate (IPP) and dimethylallyl diphosphate (DMAPP), two major building blocks of isoprenoid compounds. Catalyzes the conversion of 4-diphosphocytidyl-2-C-methyl-D-erythritol 2-phosphate (CDP-ME2P) to 2-C-methyl-D-erythritol 2,4-cyclodiphosphate (ME-CPP) with a corresponding release of cytidine 5-monophosphate (CMP). This is 2-C-methyl-D-erythritol 2,4-cyclodiphosphate synthase from Chloroherpeton thalassium (strain ATCC 35110 / GB-78).